Consider the following 239-residue polypeptide: MNIEQFQSMLEEKGISLSSRQLEQFGIYFETLVEWNEKMNLTAITEKEEVYLKHFFDSVTAAFYYDFSKPFSICDVGAGAGFPSIPLKICFPHLKVKIVDSLQKRINFLNHLAQKLELSDVAFCHDRAETFGKKEGVREAYDIVMARAVARLSVLSELCLPLVKVGGTFIAMKGAAANEEIENGKYALEVLGGELKEMSTFQLPFEESERNILLIEKKRKTPKKYPRKPGTPNKLPIEK.

S-adenosyl-L-methionine-binding positions include Gly77, Phe82, 128 to 129 (AE), and Arg147.

Belongs to the methyltransferase superfamily. RNA methyltransferase RsmG family.

It localises to the cytoplasm. Functionally, specifically methylates the N7 position of guanine in position 535 of 16S rRNA. This Bacillus mycoides (strain KBAB4) (Bacillus weihenstephanensis) protein is Ribosomal RNA small subunit methyltransferase G.